A 319-amino-acid polypeptide reads, in one-letter code: Ninja-family protein Os07g0602900 (319 aa).

Disordered regions lie at residues 1–26, 69–152, and 181–234; these read MAAS…EKGG, LPGG…DAMY, and AEAM…LTMR. Gly residues predominate over residues 70–79; the sequence is PGGGGGGAGG. A compositionally biased stretch (basic and acidic residues) spans 105-118; it reads ERWRRREMQSLKRL. Polar residues predominate over residues 185-196; the sequence is DTSSSDNASCQN. Residues 225–234 are compositionally biased toward low complexity; that stretch reads LRTLRSLTMR.

This sequence belongs to the Ninja family.

The protein resides in the nucleus. The chain is Ninja-family protein Os07g0602900 from Oryza sativa subsp. japonica (Rice).